The sequence spans 208 residues: LexA repressor (208 aa).

A DNA-binding region (H-T-H motif) is located at residues 28–48 (VREIGEAVGLASSSTVHGHLA). Catalysis depends on for autocatalytic cleavage activity residues serine 130 and lysine 168.

This sequence belongs to the peptidase S24 family. Homodimer.

It catalyses the reaction Hydrolysis of Ala-|-Gly bond in repressor LexA.. Represses a number of genes involved in the response to DNA damage (SOS response), including recA and lexA. In the presence of single-stranded DNA, RecA interacts with LexA causing an autocatalytic cleavage which disrupts the DNA-binding part of LexA, leading to derepression of the SOS regulon and eventually DNA repair. The protein is LexA repressor of Shouchella clausii (strain KSM-K16) (Alkalihalobacillus clausii).